Reading from the N-terminus, the 322-residue chain is 3-hydroxyacyl-CoA dehydrogenase FVEG_12628 (322 aa).

Residues 5–25 (IRTVAIVGCGVIGMGWAVLFL) traverse the membrane as a helical segment. Catalysis depends on Glu-151, which acts as the For hydroxyacyl-coenzyme A dehydrogenase activity.

Belongs to the 3-hydroxyacyl-CoA dehydrogenase family.

Its subcellular location is the membrane. 3-hydroxyacyl-CoA dehydrogenase; part of the Fusarium detoxification of benzoxazolinone cluster 2 (FDB2) involved in the degradation of benzoxazolinones produced by the host plant. Maize, wheat, and rye produce the 2 benzoxazinone phytoanticipins 2,4-dihy-droxy-7-methoxy-1,4-benzoxazin-3-one (DIMBOA) and 2,4-dihydroxy-1,4-benzoxazin-3-one (DIBOA) that, due to their inherent instability once released, spontaneously degrade to the more stable corresponding benzoxazolinones, 6-methoxy-2-benzoxazolinone (MBOA) and 2-benzoxazolinone (BOA), respectively. The first step in the detoxification of benzoxazolinones involves the hydrolysis of the cyclic ester bond of benzoxazolinones by the FDB1 cluster gamma-lactamase MBL1 to aminophenols. MBL1 is able to convert BOA into 2-aminophenol (2-AP), as well as MBOA into 5-methoxy-2-aminophenol (2-AMP). The FDB2 cluster N-malonyltransferase FDB2/NAT1 then metabolizes aminophenols via N-malonylation to non-toxic malonamic acids. FDB2/NAT1 converts 2-AP into N-(2-hydroxyphenyl) malonamic acid (HPMA) and 2-AMP into N-(2-hydroxy-4-methoxyphenyl) malonamic acid (HMPMA). The duplicated dienlactone hydrolases DLH1 and DLH2 may provide redundant function for hydrolyzing the lactone moiety in the BOA molecule. The roles of the amidases an other enzymes encoded by the 2 FDB clusters have not been identified so far. This chain is 3-hydroxyacyl-CoA dehydrogenase FVEG_12628, found in Gibberella moniliformis (strain M3125 / FGSC 7600) (Maize ear and stalk rot fungus).